The primary structure comprises 442 residues: tRNA-2-methylthio-N(6)-dimethylallyladenosine synthase (442 aa).

An MTTase N-terminal domain is found at 5–122 (KKVFIKTLGC…LPEMIKQKQK (118 aa)). Residues Cys-14, Cys-51, Cys-85, Cys-159, Cys-163, and Cys-166 each contribute to the [4Fe-4S] cluster site. Positions 145 to 378 (KAEGAKAYVS…DLLNSNAQII (234 aa)) constitute a Radical SAM core domain. The TRAM domain occupies 380-442 (RQMVGTNQRI…LPNSLRGELI (63 aa)).

The protein belongs to the methylthiotransferase family. MiaB subfamily. In terms of assembly, monomer. [4Fe-4S] cluster is required as a cofactor.

It is found in the cytoplasm. It catalyses the reaction N(6)-dimethylallyladenosine(37) in tRNA + (sulfur carrier)-SH + AH2 + 2 S-adenosyl-L-methionine = 2-methylsulfanyl-N(6)-dimethylallyladenosine(37) in tRNA + (sulfur carrier)-H + 5'-deoxyadenosine + L-methionine + A + S-adenosyl-L-homocysteine + 2 H(+). Catalyzes the methylthiolation of N6-(dimethylallyl)adenosine (i(6)A), leading to the formation of 2-methylthio-N6-(dimethylallyl)adenosine (ms(2)i(6)A) at position 37 in tRNAs that read codons beginning with uridine. The protein is tRNA-2-methylthio-N(6)-dimethylallyladenosine synthase of Francisella tularensis subsp. holarctica (strain FTNF002-00 / FTA).